Reading from the N-terminus, the 559-residue chain is Dihydroxy-acid dehydratase (559 aa).

Cys52 is a binding site for [2Fe-2S] cluster. Residue Asp84 participates in Mg(2+) binding. Cys125 lines the [2Fe-2S] cluster pocket. Residues Asp126 and Lys127 each coordinate Mg(2+). The residue at position 127 (Lys127) is an N6-carboxylysine. Residue Cys197 participates in [2Fe-2S] cluster binding. Glu447 serves as a coordination point for Mg(2+). The Proton acceptor role is filled by Ser473.

The protein belongs to the IlvD/Edd family. As to quaternary structure, homodimer. It depends on [2Fe-2S] cluster as a cofactor. Mg(2+) is required as a cofactor.

It carries out the reaction (2R)-2,3-dihydroxy-3-methylbutanoate = 3-methyl-2-oxobutanoate + H2O. The catalysed reaction is (2R,3R)-2,3-dihydroxy-3-methylpentanoate = (S)-3-methyl-2-oxopentanoate + H2O. Its pathway is amino-acid biosynthesis; L-isoleucine biosynthesis; L-isoleucine from 2-oxobutanoate: step 3/4. The protein operates within amino-acid biosynthesis; L-valine biosynthesis; L-valine from pyruvate: step 3/4. In terms of biological role, functions in the biosynthesis of branched-chain amino acids. Catalyzes the dehydration of (2R,3R)-2,3-dihydroxy-3-methylpentanoate (2,3-dihydroxy-3-methylvalerate) into 2-oxo-3-methylpentanoate (2-oxo-3-methylvalerate) and of (2R)-2,3-dihydroxy-3-methylbutanoate (2,3-dihydroxyisovalerate) into 2-oxo-3-methylbutanoate (2-oxoisovalerate), the penultimate precursor to L-isoleucine and L-valine, respectively. The polypeptide is Dihydroxy-acid dehydratase (Roseiflexus sp. (strain RS-1)).